The chain runs to 290 residues: 4-hydroxybenzoate octaprenyltransferase (290 aa).

Transmembrane regions (helical) follow at residues 23–43, 46–66, 99–119, 141–161, 163–183, 213–233, 234–254, and 268–288; these read IGALLLLWPTLWALWVATPGV, LWIMAVFVAGVWLMRAAGCVV, LFVVLVLISFLLVLTLNTMTI, LPQVVLGAAFGWSIPMAFAAV, ESVPLSCWLMFLANILWAVAY, LIIGILQIGVLALMAIIGELN, GLGWGYYWSIVVAGALFVYQQ, and AFMNNNYVGLVLFLGLAMSYW.

This sequence belongs to the UbiA prenyltransferase family. It depends on Mg(2+) as a cofactor.

It localises to the cell inner membrane. The enzyme catalyses all-trans-octaprenyl diphosphate + 4-hydroxybenzoate = 4-hydroxy-3-(all-trans-octaprenyl)benzoate + diphosphate. The protein operates within cofactor biosynthesis; ubiquinone biosynthesis. In terms of biological role, catalyzes the prenylation of para-hydroxybenzoate (PHB) with an all-trans polyprenyl group. Mediates the second step in the final reaction sequence of ubiquinone-8 (UQ-8) biosynthesis, which is the condensation of the polyisoprenoid side chain with PHB, generating the first membrane-bound Q intermediate 3-octaprenyl-4-hydroxybenzoate. The chain is 4-hydroxybenzoate octaprenyltransferase from Shigella flexneri.